The sequence spans 374 residues: DNA replication and repair protein RecF (374 aa).

30–37 (GENAQGKT) contributes to the ATP binding site.

The protein belongs to the RecF family.

The protein resides in the cytoplasm. In terms of biological role, the RecF protein is involved in DNA metabolism; it is required for DNA replication and normal SOS inducibility. RecF binds preferentially to single-stranded, linear DNA. It also seems to bind ATP. This is DNA replication and repair protein RecF from Geobacillus sp. (strain WCH70).